We begin with the raw amino-acid sequence, 368 residues long: Caffeine synthase 3 (368 aa).

An S-adenosyl-L-homocysteine-binding site is contributed by tyrosine 23. Threonine 30 is a binding site for caffeine. 6 residues coordinate S-adenosyl-L-homocysteine: cysteine 65, asparagine 70, aspartate 102, leucine 103, serine 137, and phenylalanine 138. 3 residues coordinate caffeine: tyrosine 155, histidine 158, and tryptophan 159. Residue asparagine 176 coordinates Mg(2+). Arginine 224 contributes to the caffeine binding site. Mg(2+) contacts are provided by aspartate 262, phenylalanine 264, and asparagine 265. Phenylalanine 320 is a binding site for caffeine.

It belongs to the methyltransferase superfamily. Type-7 methyltransferase family. It depends on Mg(2+) as a cofactor.

It carries out the reaction theobromine + S-adenosyl-L-methionine = caffeine + S-adenosyl-L-homocysteine + H(+). The catalysed reaction is 7-methylxanthine + S-adenosyl-L-methionine = theobromine + S-adenosyl-L-homocysteine + H(+). It participates in alkaloid biosynthesis. Functionally, involved in the biosynthesis of caffeine. Catalyzes the conversion of 7-methylxanthine (7mX) to theobromine and of theobromine to caffeine. This Camellia sinensis (Tea plant) protein is Caffeine synthase 3.